Reading from the N-terminus, the 759-residue chain is LPS-assembly protein LptD (759 aa).

The first 22 residues, 1–22 (MPLPIPRLLIPALLLASGASLA), serve as a signal peptide directing secretion.

It belongs to the LptD family. Component of the lipopolysaccharide transport and assembly complex. Interacts with LptE and LptA.

It is found in the cell outer membrane. In terms of biological role, together with LptE, is involved in the assembly of lipopolysaccharide (LPS) at the surface of the outer membrane. In Alcanivorax borkumensis (strain ATCC 700651 / DSM 11573 / NCIMB 13689 / SK2), this protein is LPS-assembly protein LptD.